The chain runs to 358 residues: Aurora kinase (358 aa).

Residues 1-49 are disordered; sequence MENKATLARNIGEKRVSPRSKVNGTGKSWRISYSPQRMDGVSSGRNVSK. A compositionally biased stretch (polar residues) spans 20-35; it reads SKVNGTGKSWRISYSP. The Protein kinase domain maps to 100–358; that stretch reads FEVGRKLGKG…PWILKNKPFW (259 aa). ATP-binding positions include 106-114 and K129; that span reads LGKGKFGKV. D223 serves as the catalytic Proton acceptor.

This sequence belongs to the protein kinase superfamily. Ser/Thr protein kinase family. Aurora subfamily.

It is found in the nucleus. The protein resides in the cytoplasm. The protein localises to the cytoskeleton. Its subcellular location is the spindle. It localises to the chromosome. It is found in the centromere. The protein resides in the kinetochore. It catalyses the reaction L-seryl-[protein] + ATP = O-phospho-L-seryl-[protein] + ADP + H(+). The catalysed reaction is L-threonyl-[protein] + ATP = O-phospho-L-threonyl-[protein] + ADP + H(+). Component of the chromosomal passenger complex (CPC), a complex that acts as a key regulator of chromosome segregation and cytokinesis. Has a role in error-correction of aberrent kinetochore-microtubule attachments to ensure that sister kinetochores become bioriented and connect to opposite poles by promoting spindle assembly checkpoint signaling. The sequence is that of Aurora kinase (IPL1) from Candida glabrata (strain ATCC 2001 / BCRC 20586 / JCM 3761 / NBRC 0622 / NRRL Y-65 / CBS 138) (Yeast).